A 386-amino-acid polypeptide reads, in one-letter code: MRFLSTDMKDRNMLFAAITTNQPIRSKCSRLPDLHDFFPTNISQNFAITPNLDITPTPERIAGVTIVLQIEEYLGQNESEQGAVNLARTVLGARHRNGETWQGILEDIRAGGGMDNFIQNLPGAYPETPLDQFAIIPIIDLHVGNFYLSFTNEVLYMLLTVVLVVFLFFVVTKKGGGKSVPNAWQSLVELIYDFVLNLVNEQIGGLSGNVKQKFFPRISVTFTFSLFRNPQGMIPFSFTVTSHFLITLALSFSIFIGITIVGFQRHGLHFFSFLLPAGVPLPLAPFLVLLELISYCFRALSLGIRLFANMMAGHSLVKILSGFAWTMLFLNNIFYFIGDLGPLFIVLALTGLELGVAISQAHVSTISICIYLNDATNLHQNESFHN.

The next 4 membrane-spanning stretches (helical) occupy residues 150–170, 243–263, 270–290, and 310–330; these read FTNE…LFFV, HFLI…IVGF, FFSF…LVLL, and MMAG…MLFL.

Belongs to the ATPase A chain family. As to quaternary structure, F-type ATPases have 2 components, CF(1) - the catalytic core - and CF(0) - the membrane proton channel. CF(1) has five subunits: alpha(3), beta(3), gamma(1), delta(1), epsilon(1). CF(0) has three main subunits: a, b and c.

The protein localises to the mitochondrion inner membrane. Functionally, mitochondrial membrane ATP synthase (F(1)F(0) ATP synthase or Complex V) produces ATP from ADP in the presence of a proton gradient across the membrane which is generated by electron transport complexes of the respiratory chain. F-type ATPases consist of two structural domains, F(1) - containing the extramembraneous catalytic core and F(0) - containing the membrane proton channel, linked together by a central stalk and a peripheral stalk. During catalysis, ATP synthesis in the catalytic domain of F(1) is coupled via a rotary mechanism of the central stalk subunits to proton translocation. Key component of the proton channel; it may play a direct role in the translocation of protons across the membrane. The sequence is that of ATP synthase subunit a (ATP6) from Triticum aestivum (Wheat).